The chain runs to 106 residues: Urease subunit beta (106 aa).

The protein belongs to the urease beta subunit family. As to quaternary structure, heterotrimer of UreA (gamma), UreB (beta) and UreC (alpha) subunits. Three heterotrimers associate to form the active enzyme.

It is found in the cytoplasm. It catalyses the reaction urea + 2 H2O + H(+) = hydrogencarbonate + 2 NH4(+). The protein operates within nitrogen metabolism; urea degradation; CO(2) and NH(3) from urea (urease route): step 1/1. The sequence is that of Urease subunit beta from Prochlorococcus marinus (strain NATL1A).